The sequence spans 55 residues: Ribosome biogenesis protein Nop10 (55 aa).

This sequence belongs to the NOP10 family.

In terms of biological role, involved in ribosome biogenesis; more specifically in 18S rRNA pseudouridylation and in cleavage of pre-rRNA. The protein is Ribosome biogenesis protein Nop10 of Methanosphaera stadtmanae (strain ATCC 43021 / DSM 3091 / JCM 11832 / MCB-3).